Consider the following 166-residue polypeptide: Small ribosomal subunit protein uS5 (166 aa).

The S5 DRBM domain occupies 11-74 (LQEKLIAVNR…EKARRNMINV (64 aa)).

The protein belongs to the universal ribosomal protein uS5 family. Part of the 30S ribosomal subunit. Contacts proteins S4 and S8.

Its function is as follows. With S4 and S12 plays an important role in translational accuracy. In terms of biological role, located at the back of the 30S subunit body where it stabilizes the conformation of the head with respect to the body. This Mannheimia succiniciproducens (strain KCTC 0769BP / MBEL55E) protein is Small ribosomal subunit protein uS5.